Reading from the N-terminus, the 137-residue chain is ATP synthase epsilon chain, chloroplastic (137 aa).

It belongs to the ATPase epsilon chain family. In terms of assembly, F-type ATPases have 2 components, CF(1) - the catalytic core - and CF(0) - the membrane proton channel. CF(1) has five subunits: alpha(3), beta(3), gamma(1), delta(1), epsilon(1). CF(0) has three main subunits: a, b and c.

The protein localises to the plastid. It localises to the chloroplast thylakoid membrane. Functionally, produces ATP from ADP in the presence of a proton gradient across the membrane. This Oryza nivara (Indian wild rice) protein is ATP synthase epsilon chain, chloroplastic.